The chain runs to 61 residues: Photosystem II reaction center protein K (61 aa).

The propeptide occupies 1–24 (MPNILSLTCICFNSVLCPTSFFFA). Residues 32–52 (IFNPIVDVMPVIPVLFFLLAF) form a helical membrane-spanning segment.

It belongs to the PsbK family. PSII is composed of 1 copy each of membrane proteins PsbA, PsbB, PsbC, PsbD, PsbE, PsbF, PsbH, PsbI, PsbJ, PsbK, PsbL, PsbM, PsbT, PsbX, PsbY, PsbZ, Psb30/Ycf12, at least 3 peripheral proteins of the oxygen-evolving complex and a large number of cofactors. It forms dimeric complexes.

The protein localises to the plastid. The protein resides in the chloroplast thylakoid membrane. In terms of biological role, one of the components of the core complex of photosystem II (PSII). PSII is a light-driven water:plastoquinone oxidoreductase that uses light energy to abstract electrons from H(2)O, generating O(2) and a proton gradient subsequently used for ATP formation. It consists of a core antenna complex that captures photons, and an electron transfer chain that converts photonic excitation into a charge separation. This is Photosystem II reaction center protein K from Sorghum bicolor (Sorghum).